The primary structure comprises 388 residues: Chorismate synthase (388 aa).

Residues R39 and R45 each coordinate NADP(+). Residues 130–132 (RSS), 251–252 (NA), G296, 311–315 (KPIPT), and R337 each bind FMN.

Belongs to the chorismate synthase family. Homotetramer. Requires FMNH2 as cofactor.

The enzyme catalyses 5-O-(1-carboxyvinyl)-3-phosphoshikimate = chorismate + phosphate. The protein operates within metabolic intermediate biosynthesis; chorismate biosynthesis; chorismate from D-erythrose 4-phosphate and phosphoenolpyruvate: step 7/7. Its function is as follows. Catalyzes the anti-1,4-elimination of the C-3 phosphate and the C-6 proR hydrogen from 5-enolpyruvylshikimate-3-phosphate (EPSP) to yield chorismate, which is the branch point compound that serves as the starting substrate for the three terminal pathways of aromatic amino acid biosynthesis. This reaction introduces a second double bond into the aromatic ring system. This Streptococcus pyogenes serotype M28 (strain MGAS6180) protein is Chorismate synthase.